A 475-amino-acid polypeptide reads, in one-letter code: Aspartyl/glutamyl-tRNA(Asn/Gln) amidotransferase subunit B (475 aa).

The protein belongs to the GatB/GatE family. GatB subfamily. Heterotrimer of A, B and C subunits.

It catalyses the reaction L-glutamyl-tRNA(Gln) + L-glutamine + ATP + H2O = L-glutaminyl-tRNA(Gln) + L-glutamate + ADP + phosphate + H(+). The enzyme catalyses L-aspartyl-tRNA(Asn) + L-glutamine + ATP + H2O = L-asparaginyl-tRNA(Asn) + L-glutamate + ADP + phosphate + 2 H(+). Its function is as follows. Allows the formation of correctly charged Asn-tRNA(Asn) or Gln-tRNA(Gln) through the transamidation of misacylated Asp-tRNA(Asn) or Glu-tRNA(Gln) in organisms which lack either or both of asparaginyl-tRNA or glutaminyl-tRNA synthetases. The reaction takes place in the presence of glutamine and ATP through an activated phospho-Asp-tRNA(Asn) or phospho-Glu-tRNA(Gln). In Staphylococcus aureus (strain bovine RF122 / ET3-1), this protein is Aspartyl/glutamyl-tRNA(Asn/Gln) amidotransferase subunit B.